A 361-amino-acid chain; its full sequence is tRNA 2-selenouridine synthase (361 aa).

The 124-residue stretch at 11-134 folds into the Rhodanese domain; that stretch reads LIADTPLIDV…LRQTAIQATW (124 aa). The active-site S-selanylcysteine intermediate is the C94.

This sequence belongs to the SelU family. In terms of assembly, monomer.

It carries out the reaction 5-methylaminomethyl-2-thiouridine(34) in tRNA + selenophosphate + (2E)-geranyl diphosphate + H2O + H(+) = 5-methylaminomethyl-2-selenouridine(34) in tRNA + (2E)-thiogeraniol + phosphate + diphosphate. It catalyses the reaction 5-methylaminomethyl-2-thiouridine(34) in tRNA + (2E)-geranyl diphosphate = 5-methylaminomethyl-S-(2E)-geranyl-thiouridine(34) in tRNA + diphosphate. The catalysed reaction is 5-methylaminomethyl-S-(2E)-geranyl-thiouridine(34) in tRNA + selenophosphate + H(+) = 5-methylaminomethyl-2-(Se-phospho)selenouridine(34) in tRNA + (2E)-thiogeraniol. The enzyme catalyses 5-methylaminomethyl-2-(Se-phospho)selenouridine(34) in tRNA + H2O = 5-methylaminomethyl-2-selenouridine(34) in tRNA + phosphate. Involved in the post-transcriptional modification of the uridine at the wobble position (U34) of tRNA(Lys), tRNA(Glu) and tRNA(Gln). Catalyzes the conversion of 2-thiouridine (S2U-RNA) to 2-selenouridine (Se2U-RNA). Acts in a two-step process involving geranylation of 2-thiouridine (S2U) to S-geranyl-2-thiouridine (geS2U) and subsequent selenation of the latter derivative to 2-selenouridine (Se2U) in the tRNA chain. This is tRNA 2-selenouridine synthase from Salmonella arizonae (strain ATCC BAA-731 / CDC346-86 / RSK2980).